A 554-amino-acid polypeptide reads, in one-letter code: Malate synthase 2 (554 aa).

Arginine 177 functions as the Proton acceptor in the catalytic mechanism. The active-site Proton donor is aspartate 457. The SKL peroxisome targeting motif signature appears at 552-554; that stretch reads SKL.

Belongs to the malate synthase family. Interacts with PEX9.

The protein localises to the peroxisome matrix. The catalysed reaction is glyoxylate + acetyl-CoA + H2O = (S)-malate + CoA + H(+). Its function is as follows. Allantoin metabolism-specific malate synthase involved in the recycling the glyoxylate generated during allantoin degradation by the ureidoglycollate (UG) hydrolase reaction. This Saccharomyces cerevisiae (strain ATCC 204508 / S288c) (Baker's yeast) protein is Malate synthase 2.